The following is a 290-amino-acid chain: Pantothenate synthetase (290 aa).

ATP is bound at residue 30–37 (MGALHEGH). His37 functions as the Proton donor in the catalytic mechanism. Position 61 (Gln61) interacts with (R)-pantoate. Gln61 serves as a coordination point for beta-alanine. 147–150 (GEKD) lines the ATP pocket. Residue Gln153 participates in (R)-pantoate binding. Residues Val176 and 184 to 187 (KSSR) contribute to the ATP site.

The protein belongs to the pantothenate synthetase family. Homodimer.

The protein resides in the cytoplasm. It catalyses the reaction (R)-pantoate + beta-alanine + ATP = (R)-pantothenate + AMP + diphosphate + H(+). Its pathway is cofactor biosynthesis; (R)-pantothenate biosynthesis; (R)-pantothenate from (R)-pantoate and beta-alanine: step 1/1. In terms of biological role, catalyzes the condensation of pantoate with beta-alanine in an ATP-dependent reaction via a pantoyl-adenylate intermediate. The sequence is that of Pantothenate synthetase from Chlorobium chlorochromatii (strain CaD3).